A 202-amino-acid chain; its full sequence is Guanylate kinase (202 aa).

Residues 3-181 (GNLFVVAAPS…ALDDLRAVVR (179 aa)) form the Guanylate kinase-like domain. Residue 10-17 (APSGAGKT) coordinates ATP.

The protein belongs to the guanylate kinase family.

The protein resides in the cytoplasm. It catalyses the reaction GMP + ATP = GDP + ADP. Functionally, essential for recycling GMP and indirectly, cGMP. In Dechloromonas aromatica (strain RCB), this protein is Guanylate kinase.